Consider the following 1535-residue polypeptide: Protein artichoke (1535 aa).

Positions 1–19 are cleaved as a signal peptide; it reads MMLLPIFLLLCIGINLIRA. 34 LRR repeats span residues 64-87, 89-110, 112-135, 136-157, 158-181, 183-206, 207-230, 231-256, 257-280, 281-304, 306-328, 331-356, 357-380, 382-404, 406-429, 430-452, 453-476, 478-500, 521-545, 548-571, 573-595, 597-619, 620-643, 645-667, 669-691, 692-714, 716-738, 739-762, 764-786, 788-810, 811-834, 835-858, 860-882, and 883-906; these read KGRI…FFGS, QIVR…WLNE, ENGL…SLNG, MINM…DFSG, LLSL…LFRH, PKLQ…LFDG, LISL…ALSR, LPNL…IVKD, LEHL…SFVD, LPNL…AFLR, PQLK…SLLQ, GSGV…LLDA, LPRL…ALRG, GTLE…ALMA, PALR…FWNL, PGLK…LLAG, LPSL…SFRH, PLLE…TLIH, LPRI…ASKD, LPNL…GFQG, MELR…SFIG, QRLE…ALLP, LAEL…FFSN, SRLE…AFDT, RSLE…LGNL, NNLR…VIGG, RNVV…TFRN, LPKL…ALKG, DELQ…VFEE, PSLL…SFHN, ANSL…GLRS, MRNL…PLKA, NWLV…PFET, and MPRL…TFRN. The LRRCT domain maps to 919–963; sequence NPIDCNCEMQWLSVWLQETNFPYPGPKCQDGRLLRSARMERSLCV. 4 disordered regions span residues 1036 to 1055, 1253 to 1331, 1377 to 1416, and 1429 to 1449; these read HSAI…NSNI, TQAR…DSQY, VTTT…GRST, and AQPT…EGVA. Polar residues predominate over residues 1253–1270; the sequence is TQARPKPTKSSGESSETA. Composition is skewed to low complexity over residues 1271-1285 and 1293-1315; these read TYEV…TTTT and TSTT…TQVT. Composition is skewed to polar residues over residues 1316–1328 and 1377–1391; these read PAEN…TELD and VTTT…NQVT. The segment covering 1398 to 1407 has biased composition (pro residues); it reads TVPPPPPASP.

It localises to the secreted. It is found in the extracellular space. The protein resides in the extracellular matrix. Its subcellular location is the cytoplasm. Its function is as follows. Required for normal morphology and function of ciliated sensory organs. The polypeptide is Protein artichoke (Drosophila melanogaster (Fruit fly)).